Consider the following 549-residue polypeptide: Myotubularin-related protein 9 (549 aa).

Position 1 is an N-acetylmethionine (M1). The GRAM domain occupies A4–L99. A Myotubularin phosphatase domain is found at G123–F498. Residues L508–E542 adopt a coiled-coil conformation. S548 carries the phosphoserine modification.

Belongs to the protein-tyrosine phosphatase family. Non-receptor class myotubularin subfamily. In terms of assembly, homodimer. Heterodimer (via C-terminus) with lipid phosphatase MTMR6 (via C-terminus). Heterodimer (via coiled coil domain) with lipid phosphatase MTMR7 (via C-terminus). Heterodimer with lipid phosphatase MTMR8.

The protein resides in the cytoplasm. It localises to the cell projection. It is found in the ruffle membrane. Its subcellular location is the perinuclear region. The protein localises to the endoplasmic reticulum. Functionally, acts as an adapter for myotubularin-related phosphatases. Increases lipid phosphatase MTMR6 catalytic activity, specifically towards phosphatidylinositol 3,5-bisphosphate, and MTMR6 binding affinity for phosphorylated phosphatidylinositols. Positively regulates lipid phosphatase MTMR7 catalytic activity. Increases MTMR8 catalytic activity towards phosphatidylinositol 3-phosphate. The formation of the MTMR6-MTMR9 complex, stabilizes both MTMR6 and MTMR9 protein levels. Stabilizes MTMR8 protein levels. Plays a role in the late stages of macropinocytosis possibly by regulating MTMR6-mediated dephosphorylation of phosphatidylinositol 3-phosphate in membrane ruffles. Negatively regulates autophagy, in part via its association with MTMR8. Negatively regulates DNA damage-induced apoptosis, in part via its association with MTMR6. Does not bind mono-, di- and tri-phosphorylated phosphatidylinositols, phosphatidic acid and phosphatidylserine. The polypeptide is Myotubularin-related protein 9 (MTMR9) (Bos taurus (Bovine)).